We begin with the raw amino-acid sequence, 255 residues long: Coenzyme F420:L-glutamate ligase (255 aa).

GTP contacts are provided by residues 11-14, 40-41, and Lys45; these read IPLI and ST. Asp109 provides a ligand contact to a divalent metal cation. Asn112 provides a ligand contact to GTP. The a divalent metal cation site is built by Asp150, Thr151, and Glu208. 206-213 is a GTP binding site; sequence MGEGAGGT.

It belongs to the CofE family. As to quaternary structure, homodimer. Requires Mg(2+) as cofactor. It depends on Mn(2+) as a cofactor. K(+) serves as cofactor.

The catalysed reaction is oxidized coenzyme F420-0 + GTP + L-glutamate = oxidized coenzyme F420-1 + GDP + phosphate + H(+). It catalyses the reaction oxidized coenzyme F420-1 + GTP + L-glutamate = oxidized coenzyme F420-2 + GDP + phosphate + H(+). Its pathway is cofactor biosynthesis; coenzyme F420 biosynthesis. In terms of biological role, catalyzes the GTP-dependent successive addition of two or more gamma-linked L-glutamates to the L-lactyl phosphodiester of 7,8-didemethyl-8-hydroxy-5-deazariboflavin (F420-0) to form coenzyme F420-0-glutamyl-glutamate (F420-2) or polyglutamated F420 derivatives. The chain is Coenzyme F420:L-glutamate ligase from Methanosarcina barkeri (strain Fusaro / DSM 804).